Here is a 626-residue protein sequence, read N- to C-terminus: Grainyhead-like protein 3 homolog (626 aa).

Residues Glu30–Glu95 form a transcription activation region. The Grh/CP2 DB domain occupies Ser226 to Ile460.

It belongs to the grh/CP2 family. Grainyhead subfamily. As to quaternary structure, homodimer, also forms heterodimers with GRHL1 and GRHL2. Interacts with LMO4. Expressed in brain, colon, pancreas, placenta and kidney. Isoform 1 is expressed in lung and tonsil. Isoform 2 is prostate-specific.

It is found in the nucleus. Functionally, transcription factor playing important roles in primary neurulation and in the differentiation of stratified epithelia of both ectodermal and endodermal origin. Binds directly to the consensus DNA sequence 5'-AACCGGTT-3' acting as an activator and repressor on distinct target genes. xhibits functional redundancy with GRHL2 in epidermal morphogenetic events and epidermal wound repair. Exhibits functional redundancy with GRHL2 in epidermal morphogenetic events and epidermal wound repair but is essential to form the epidermal barrier with TGM3 as critical direct target gene among others. Despite being dispensable during normal epidermal homeostasis in the adulthood, is again required for barrier repair after immune-mediated epidermal damage, regulates distinct gene batteries in embryonic epidermal differentiation and adult epidermal barrier reformation after injury. Plays unique and cooperative roles with GRHL2 in establishing distinct zones of primary neurulation. Essential for spinal closure, functions cooperatively with GRHL2 in closure 2 (forebrain/midbrain boundary) and posterior neuropore closure. Also required for proper development of the oral periderm. No genetic interaction with GRHL3, no functional cooperativity due to diverse target gene selectivity. The chain is Grainyhead-like protein 3 homolog from Homo sapiens (Human).